The following is a 680-amino-acid chain: MTMAAGPSSQEPEGLLIVKLEEDCAWSHEVPPPEPEPSPEASHLRFRRFRFQDAPGPREALSRLQELCRGWLRPEMRTKEQILELLVLEQFLTILPQEIQSRVQELRPESGEEAVTLVERMQKELGKLRQQVTNQGRGAEVLLEEPLPLETAGESPSFKLEPMETERSPGPRLQELLDPSPQRDSQAVKERALSAPWLSLFPPEGNVEDKDMTGTQLPESLEDMAMYISQEWDHQDPSKRALSRYMVQDSYENSGTLESSIPSQEVSSTHVEQGEKLWDSSVQTCKEGMNPRNPVPGVEKFENQERNVESVSPESTHPPVLLPGQARREVPWSPEQGRLDDREGHWECPPEDKIEESLVGTPSCKGLVQAKEQPKKLHLCALCGKNFSNNSNLIRHQRIHAAEKLCMDVECGEVFGGHPHFLSLHRTHIGEEAHKCLECGKCFSQNTHLTRHQRTHTGEKPFQCNACGKSFSCNSNLNRHQRTHTGEKPYKCPECGEIFAHSSNLLRHQRIHTGERPYRCSECGKSFSRSSHLVIHERTHEKERLDPFPECGQGMNDSAPFLTNHRVEKKLFECSTCGKSFRQGMHLTRHQRTHTGEKPYKCILCGENFSHRSNLIRHQRIHTGEKPYTCHECGDSFSHSSNRIRHLRTHTGERPYKCSECGESFSRSSRLTSHQRTHTG.

Residue Lys-19 forms a Glycyl lysine isopeptide (Lys-Gly) (interchain with G-Cter in SUMO2) linkage. The SCAN box domain occupies 43-125 (HLRFRRFRFQ…TLVERMQKEL (83 aa)). A disordered region spans residues 147–191 (LPLETAGESPSFKLEPMETERSPGPRLQELLDPSPQRDSQAVKER). Lys-159 participates in a covalent cross-link: Glycyl lysine isopeptide (Lys-Gly) (interchain with G-Cter in SUMO2). Phosphoserine is present on residues Ser-168 and Ser-180. Residues Lys-286, Lys-300, and Lys-376 each participate in a glycyl lysine isopeptide (Lys-Gly) (interchain with G-Cter in SUMO2) cross-link. C2H2-type zinc fingers lie at residues 378–400 (HLCA…QRIH), 434–456 (HKCL…QRTH), 462–484 (FQCN…QRTH), 490–512 (YKCP…QRIH), and 518–540 (YRCS…ERTH). Residues Lys-570 and Lys-579 each participate in a glycyl lysine isopeptide (Lys-Gly) (interchain with G-Cter in SUMO2) cross-link. C2H2-type zinc fingers lie at residues 572–594 (FECS…QRTH), 600–622 (YKCI…QRIH), 628–650 (YTCH…LRTH), and 656–678 (YKCS…QRTH).

Belongs to the krueppel C2H2-type zinc-finger protein family. As to quaternary structure, interacts with a number of proteins involved in chromatin modification and transcriptional corepression including DNMT1, DNMT3A, HDAC2, PHF8, TRIM28/KAP1, SETDB1, EZH2, UHRF1, CBX3/HP1-gamma, and CBX5/HP1-alpha; recruits these proteins to the SIX3 promoter region, leading to SIX3 transcriptional repression. Interacts with MAPK3/ERK1 and MAPK1/ERK2. Ubiquitinated, leading to proteasomal degradation. As to expression, expressed in Purkinje cells in the brain (at protein level).

It is found in the nucleus. Its function is as follows. Transcription factor that binds to the consensus sequence 5'-TCCTCCC-3' and acts as a transcriptional repressor. Binds to the promoter region of SIX3 and recruits other proteins involved in chromatin modification and transcriptional corepression, resulting in methylation of the promoter and transcriptional repression. Acts as a transcriptional repressor of HS3ST1 and HS3ST3A1 via binding to gene promoter regions. The chain is Zinc finger protein 263 from Mus musculus (Mouse).